A 204-amino-acid polypeptide reads, in one-letter code: ATP-dependent Clp protease proteolytic subunit (204 aa).

Serine 101 serves as the catalytic Nucleophile. Histidine 126 is a catalytic residue.

The protein belongs to the peptidase S14 family. As to quaternary structure, component of the chloroplastic Clp protease core complex.

It localises to the plastid. Its subcellular location is the chloroplast stroma. The enzyme catalyses Hydrolysis of proteins to small peptides in the presence of ATP and magnesium. alpha-casein is the usual test substrate. In the absence of ATP, only oligopeptides shorter than five residues are hydrolyzed (such as succinyl-Leu-Tyr-|-NHMec, and Leu-Tyr-Leu-|-Tyr-Trp, in which cleavage of the -Tyr-|-Leu- and -Tyr-|-Trp bonds also occurs).. Cleaves peptides in various proteins in a process that requires ATP hydrolysis. Has a chymotrypsin-like activity. Plays a major role in the degradation of misfolded proteins. The protein is ATP-dependent Clp protease proteolytic subunit of Phalaenopsis aphrodite subsp. formosana (Moth orchid).